The primary structure comprises 84 residues: Small ribosomal subunit protein bS18A (84 aa).

It belongs to the bacterial ribosomal protein bS18 family. As to quaternary structure, part of the 30S ribosomal subunit. Forms a tight heterodimer with protein bS6.

Functionally, binds as a heterodimer with protein bS6 to the central domain of the 16S rRNA, where it helps stabilize the platform of the 30S subunit. The sequence is that of Small ribosomal subunit protein bS18A from Frankia alni (strain DSM 45986 / CECT 9034 / ACN14a).